The sequence spans 154 residues: uncharacterized protein (154 aa).

This is an uncharacterized protein from Archaeoglobus fulgidus (strain ATCC 49558 / DSM 4304 / JCM 9628 / NBRC 100126 / VC-16).